The primary structure comprises 849 residues: Protein translocase subunit SecA (849 aa).

Residues glutamine 85, 103-107 (GEGKT), and aspartate 493 each bind ATP. Cysteine 832, cysteine 834, cysteine 843, and histidine 844 together coordinate Zn(2+).

Belongs to the SecA family. In terms of assembly, monomer and homodimer. Part of the essential Sec protein translocation apparatus which comprises SecA, SecYEG and auxiliary proteins SecDF. Other proteins may also be involved. It depends on Zn(2+) as a cofactor.

It is found in the cell membrane. It localises to the cytoplasm. It catalyses the reaction ATP + H2O + cellular proteinSide 1 = ADP + phosphate + cellular proteinSide 2.. In terms of biological role, part of the Sec protein translocase complex. Interacts with the SecYEG preprotein conducting channel. Has a central role in coupling the hydrolysis of ATP to the transfer of proteins into and across the cell membrane, serving as an ATP-driven molecular motor driving the stepwise translocation of polypeptide chains across the membrane. The polypeptide is Protein translocase subunit SecA (Streptococcus thermophilus (strain ATCC BAA-491 / LMD-9)).